The sequence spans 83 residues: Small ribosomal subunit protein eS21 (83 aa).

Belongs to the eukaryotic ribosomal protein eS21 family. As to quaternary structure, component of the 40S small ribosomal subunit.

Its subcellular location is the cytoplasm. It localises to the cytosol. The protein resides in the rough endoplasmic reticulum. Its function is as follows. Component of the small ribosomal subunit. The ribosome is a large ribonucleoprotein complex responsible for the synthesis of proteins in the cell. This chain is Small ribosomal subunit protein eS21 (rps21), found in Xenopus tropicalis (Western clawed frog).